The following is an 86-amino-acid chain: Large ribosomal subunit protein bL27 (86 aa).

A disordered region spans residues 1–21 (MAHKKGASSSRNGRDSAAQRL).

Belongs to the bacterial ribosomal protein bL27 family.

This Mycobacterium tuberculosis (strain CDC 1551 / Oshkosh) protein is Large ribosomal subunit protein bL27 (rpmA).